Here is a 268-residue protein sequence, read N- to C-terminus: Hydroxyethylthiazole kinase (268 aa).

Substrate is bound at residue Met45. Residues Arg121 and Thr167 each contribute to the ATP site. Substrate is bound at residue Gly194.

This sequence belongs to the Thz kinase family. Mg(2+) serves as cofactor.

It catalyses the reaction 5-(2-hydroxyethyl)-4-methylthiazole + ATP = 4-methyl-5-(2-phosphooxyethyl)-thiazole + ADP + H(+). It functions in the pathway cofactor biosynthesis; thiamine diphosphate biosynthesis; 4-methyl-5-(2-phosphoethyl)-thiazole from 5-(2-hydroxyethyl)-4-methylthiazole: step 1/1. In terms of biological role, catalyzes the phosphorylation of the hydroxyl group of 4-methyl-5-beta-hydroxyethylthiazole (THZ). This chain is Hydroxyethylthiazole kinase, found in Bacillus thuringiensis (strain Al Hakam).